The chain runs to 933 residues: Serine/threonine-protein kinase PknD (933 aa).

The Protein kinase domain occupies 4–291 (YDIIRMIGKG…ALKADIEQHL (288 aa)). Residues 10–18 (IGKGGMGEV) and Lys33 contribute to the ATP site. Catalysis depends on Asp138, which acts as the Proton acceptor.

This sequence belongs to the protein kinase superfamily. Ser/Thr protein kinase family. Post-translationally, autophosphorylated on serine and threonine residues.

The catalysed reaction is L-seryl-[protein] + ATP = O-phospho-L-seryl-[protein] + ADP + H(+). It catalyses the reaction L-threonyl-[protein] + ATP = O-phospho-L-threonyl-[protein] + ADP + H(+). Functionally, together with the serine/threonine kinase Pkn1, may play a role in the specific interactions with host proteins during intracellular growth. In Chlamydia abortus (strain DSM 27085 / S26/3) (Chlamydophila abortus), this protein is Serine/threonine-protein kinase PknD.